A 688-amino-acid polypeptide reads, in one-letter code: Lipase (688 aa).

The first 35 residues, Met1–Ala35, serve as a signal peptide directing secretion. Positions Gly31 to Asn309 are disordered. The propeptide at Ala36–Ala302 is removed in mature form. Residues Val45–Gly54 are compositionally biased toward polar residues. Residues Asn68 to Ser79 show a composition bias toward low complexity. 3 stretches are compositionally biased toward basic and acidic residues: residues Glu84 to Asp95, Ser103 to Lys117, and His126 to Ser143. Over residues Glu144–Ala172 the composition is skewed to polar residues. Basic and acidic residues predominate over residues Lys173–Ser183. A compositionally biased stretch (polar residues) spans Lys184–Glu211. Basic and acidic residues predominate over residues Ser240–Ser267. Over residues Leu274–Gln289 the composition is skewed to polar residues. Catalysis depends on Ser418, which acts as the Nucleophile. Asp609 serves as the catalytic Charge relay system. Residue Asp647 coordinates Ca(2+). His648 acts as the Charge relay system in catalysis. Residues Asp650, Asp655, and Asp658 each coordinate Ca(2+).

It belongs to the AB hydrolase superfamily. Lipase family.

It is found in the secreted. The catalysed reaction is a triacylglycerol + H2O = a diacylglycerol + a fatty acid + H(+). This is Lipase (lip) from Staphylococcus epidermidis.